A 199-amino-acid chain; its full sequence is Cell division protein SepF (199 aa).

The segment at 15-79 (TEDGDETEVQ…PQPQQKSSTE (65 aa)) is disordered.

This sequence belongs to the SepF family. Homodimer. Interacts with FtsZ.

Its subcellular location is the cytoplasm. Functionally, cell division protein that is part of the divisome complex and is recruited early to the Z-ring. Probably stimulates Z-ring formation, perhaps through the cross-linking of FtsZ protofilaments. Its function overlaps with FtsA. The protein is Cell division protein SepF of Streptococcus sanguinis (strain SK36).